The sequence spans 598 residues: Aspartate--tRNA(Asp/Asn) ligase (598 aa).

Glu-173 provides a ligand contact to L-aspartate. Positions 197-200 (QLFK) are aspartate. L-aspartate is bound at residue Arg-219. Residues 219–221 (RDE) and Gln-228 contribute to the ATP site. L-aspartate is bound at residue His-448. Glu-482 is an ATP binding site. Arg-489 contributes to the L-aspartate binding site. 534–537 (GWDR) is an ATP binding site. The tract at residues 560-598 (GYDPLTAAPAPITAQQRKEAGVDAKPETKKAAAGEPAGA) is disordered. Residues 575–591 (QRKEAGVDAKPETKKAA) are compositionally biased toward basic and acidic residues.

The protein belongs to the class-II aminoacyl-tRNA synthetase family. Type 1 subfamily. In terms of assembly, homodimer.

It localises to the cytoplasm. It carries out the reaction tRNA(Asx) + L-aspartate + ATP = L-aspartyl-tRNA(Asx) + AMP + diphosphate. Its function is as follows. Aspartyl-tRNA synthetase with relaxed tRNA specificity since it is able to aspartylate not only its cognate tRNA(Asp) but also tRNA(Asn). Reaction proceeds in two steps: L-aspartate is first activated by ATP to form Asp-AMP and then transferred to the acceptor end of tRNA(Asp/Asn). The sequence is that of Aspartate--tRNA(Asp/Asn) ligase from Kineococcus radiotolerans (strain ATCC BAA-149 / DSM 14245 / SRS30216).